A 1001-amino-acid chain; its full sequence is Kinesin-like protein KIN-14P (1001 aa).

Residues 53–172 (AIRRYEAANW…CVLSLRSFSE (120 aa)) enclose the Calponin-homology (CH) domain. The span at 284–300 (NESVKHALDPNDDKLLS) shows a compositional bias: basic and acidic residues. Residues 284–322 (NESVKHALDPNDDKLLSRADTPPEMESTCTCSTGNMDEE) form a disordered region. The Kinesin motor domain occupies 426–748 (NIRVYCRVRP…LKFAERVATV (323 aa)). 509 to 516 (GQTGSGKT) lines the ATP pocket. Positions 756–784 (NKEGGEVKELKEQIACLKAALAKKDGETE) form a coiled coil. Disordered regions lie at residues 804–830 (PPAF…QKKR) and 890–1001 (EPQW…SAKK). Positions 972-984 (PSASTKNGKQLSL) are enriched in polar residues.

This sequence belongs to the TRAFAC class myosin-kinesin ATPase superfamily. Kinesin family. KIN-14 subfamily.

The polypeptide is Kinesin-like protein KIN-14P (Oryza sativa subsp. japonica (Rice)).